A 485-amino-acid polypeptide reads, in one-letter code: E3 ubiquitin-protein ligase RNF8 (485 aa).

Residues 38-92 form the FHA domain; the sequence is VTVGRGFGVTYQLVSKICPLMISRNHCVLKQNPEGQWTIMDNKSLNGVWLNRARL. Residues 68 to 72 are required for interaction with PIWIL1; the sequence is QNPEG. At S157 the chain carries Phosphoserine. The disordered stretch occupies residues 181–220; the sequence is CESGQPVKSQGKGEVASTPSDNLDPKLTALEPSKTTGAPI. Residues 403 to 441 form an RING-type zinc finger; that stretch reads CIICSEYFIEAVTLNCAHSFCSYCINEWMKRKIECPICR.

Belongs to the RNF8 family. Homodimer. Forms a E2-E3 ubiquitin ligase complex composed of the RNF8 homodimer and a E2 heterodimer of UBE2N and UBE2V2. Interacts with class III E2s, including UBE2E1, UBE2E2, and UBE2E3 and with UBE2N. Interacts with RXRA. Interacts (via FHA domain) with ATM-phosphorylated MDC1. Interacts (via FHA domain) with 'Thr-4827' phosphorylated HERC2 (via C-terminus). Interacts with PIWIL1; leading to sequester RNF8 in the cytoplasm. Interacts with WRAP53/TCAB1. In terms of assembly, (Microbial infection) Interacts (via FHA domain) with phosphorylated human herpesvirus 1 ICP0 protein; leading to RNF8 degradation by the proteasome. In terms of processing, autoubiquitinated through 'Lys-48' and 'Lys-63' of ubiquitin. 'Lys-63' polyubiquitination is mediated by UBE2N. 'Lys-29'-type polyubiquitination is also observed, but it doesn't require its own functional RING-type zinc finger. In terms of tissue distribution, ubiquitous. In fetal tissues, highest expression in brain, thymus and liver. In adult tissues, highest levels in brain and testis, lowest levels in peripheral blood cells.

Its subcellular location is the nucleus. The protein resides in the cytoplasm. The protein localises to the midbody. It is found in the chromosome. It localises to the telomere. The catalysed reaction is S-ubiquitinyl-[E2 ubiquitin-conjugating enzyme]-L-cysteine + [acceptor protein]-L-lysine = [E2 ubiquitin-conjugating enzyme]-L-cysteine + N(6)-ubiquitinyl-[acceptor protein]-L-lysine.. It functions in the pathway protein modification; protein ubiquitination. Its function is as follows. E3 ubiquitin-protein ligase that plays a key role in DNA damage signaling via 2 distinct roles: by mediating the 'Lys-63'-linked ubiquitination of histones H2A and H2AX and promoting the recruitment of DNA repair proteins at double-strand breaks (DSBs) sites, and by catalyzing 'Lys-48'-linked ubiquitination to remove target proteins from DNA damage sites. Following DNA DSBs, it is recruited to the sites of damage by ATM-phosphorylated MDC1 and catalyzes the 'Lys-63'-linked ubiquitination of histones H2A and H2AX, thereby promoting the formation of TP53BP1 and BRCA1 ionizing radiation-induced foci (IRIF). Also controls the recruitment of UIMC1-BRCC3 (RAP80-BRCC36) and PAXIP1/PTIP to DNA damage sites. Promotes the recruitment of NBN to DNA damage sites by catalyzing 'Lys-6'-linked ubiquitination of NBN. Also recruited at DNA interstrand cross-links (ICLs) sites and catalyzes 'Lys-63'-linked ubiquitination of histones H2A and H2AX, leading to recruitment of FAAP20/C1orf86 and Fanconi anemia (FA) complex, followed by interstrand cross-link repair. H2A ubiquitination also mediates the ATM-dependent transcriptional silencing at regions flanking DSBs in cis, a mechanism to avoid collision between transcription and repair intermediates. Promotes the formation of 'Lys-63'-linked polyubiquitin chains via interactions with the specific ubiquitin-conjugating UBE2N/UBC13 and ubiquitinates non-histone substrates such as PCNA. Substrates that are polyubiquitinated at 'Lys-63' are usually not targeted for degradation. Also catalyzes the formation of 'Lys-48'-linked polyubiquitin chains via interaction with the ubiquitin-conjugating UBE2L6/UBCH8, leading to degradation of substrate proteins such as CHEK2, JMJD2A/KDM4A and KU80/XRCC5: it is still unclear how the preference toward 'Lys-48'- versus 'Lys-63'-linked ubiquitination is regulated but it could be due to RNF8 ability to interact with specific E2 specific ligases. For instance, interaction with phosphorylated HERC2 promotes the association between RNF8 and UBE2N/UBC13 and favors the specific formation of 'Lys-63'-linked ubiquitin chains. Promotes non-homologous end joining (NHEJ) by promoting the 'Lys-48'-linked ubiquitination and degradation the of KU80/XRCC5. Following DNA damage, mediates the ubiquitination and degradation of JMJD2A/KDM4A in collaboration with RNF168, leading to unmask H4K20me2 mark and promote the recruitment of TP53BP1 at DNA damage sites. Following DNA damage, mediates the ubiquitination and degradation of POLD4/p12, a subunit of DNA polymerase delta. In the absence of POLD4, DNA polymerase delta complex exhibits higher proofreading activity. In addition to its function in damage signaling, also plays a role in higher-order chromatin structure by mediating extensive chromatin decondensation. Involved in the activation of ATM by promoting histone H2B ubiquitination, which indirectly triggers histone H4 'Lys-16' acetylation (H4K16ac), establishing a chromatin environment that promotes efficient activation of ATM kinase. Required in the testis, where it plays a role in the replacement of histones during spermatogenesis. At uncapped telomeres, promotes the joining of deprotected chromosome ends by inducing H2A ubiquitination and TP53BP1 recruitment, suggesting that it may enhance cancer development by aggravating telomere-induced genome instability in case of telomeric crisis. Promotes the assembly of RAD51 at DNA DSBs in the absence of BRCA1 and TP53BP1 Also involved in class switch recombination in immune system, via its role in regulation of DSBs repair. May be required for proper exit from mitosis after spindle checkpoint activation and may regulate cytokinesis. May play a role in the regulation of RXRA-mediated transcriptional activity. Not involved in RXRA ubiquitination by UBE2E2. This chain is E3 ubiquitin-protein ligase RNF8, found in Homo sapiens (Human).